Here is a 558-residue protein sequence, read N- to C-terminus: Formate--tetrahydrofolate ligase (558 aa).

Residue 66-73 (TPAGEGKT) coordinates ATP.

It belongs to the formate--tetrahydrofolate ligase family.

The catalysed reaction is (6S)-5,6,7,8-tetrahydrofolate + formate + ATP = (6R)-10-formyltetrahydrofolate + ADP + phosphate. The protein operates within one-carbon metabolism; tetrahydrofolate interconversion. The chain is Formate--tetrahydrofolate ligase from Neisseria meningitidis serogroup C (strain 053442).